A 1303-amino-acid chain; its full sequence is Protein STU1 (1303 aa).

Disordered regions lie at residues 239-259, 531-664, and 953-977; these read RGSD…NTPV, SQRE…GAVS, and EASD…NSEH. The span at 249–259 shows a compositional bias: polar residues; sequence RANTPRSNTPV. Over residues 554-568 the composition is skewed to basic and acidic residues; it reads SLKEAILEKNKELRQ. Over residues 573-583 the composition is skewed to polar residues; the sequence is SRNSGEQSTKI. A compositionally biased stretch (basic and acidic residues) spans 596–609; it reads SRLEKSLLRPDVGH. Polar residues predominate over residues 618-629; it reads SSWTYPSTQSGP. Residues 634–648 are compositionally biased toward basic and acidic residues; that stretch reads KQRERSKTEVHKKSP. Composition is skewed to polar residues over residues 653 to 664 and 955 to 972; these read RPSSRLDTGAVS and SDSS…SSKR.

This sequence belongs to the CLASP family. As to quaternary structure, interacts with microtubules.

The protein resides in the cytoplasm. It localises to the cytoskeleton. It is found in the nucleus. The protein localises to the spindle. Its function is as follows. Microtubule binding protein that promotes the stabilization of dynamic microtubules. Required for mitotic spindle formation. The chain is Protein STU1 (STU1) from Candida albicans (strain SC5314 / ATCC MYA-2876) (Yeast).